The sequence spans 231 residues: Quercetin 2,3-dioxygenase (231 aa).

The a divalent metal cation site is built by His-57, His-59, His-101, and Glu-103.

This sequence belongs to the pirin family. Zn(2+) serves as cofactor. It depends on Co(2+) as a cofactor. Fe(2+) is required as a cofactor.

It carries out the reaction quercetin + O2 = 2-(3,4-dihydroxybenzoyloxy)-4,6-dihydroxybenzoate + CO. The protein operates within flavonoid metabolism; quercetin degradation. Functionally, has quercetin 2,3-dioxygenase activity in vitro. Its physiological role is unknown; however, may provide a mechanism that would avoid inhibition of key cellular proteins, such as DNA gyrase, by quercetin. The chain is Quercetin 2,3-dioxygenase (yhhW) from Escherichia coli O157:H7.